The chain runs to 103 residues: Putative membrane protein insertion efficiency factor (103 aa).

The protein belongs to the UPF0161 family.

It localises to the cell inner membrane. Could be involved in insertion of integral membrane proteins into the membrane. The protein is Putative membrane protein insertion efficiency factor of Chlamydia pneumoniae (Chlamydophila pneumoniae).